A 340-amino-acid chain; its full sequence is 4-amino-5-hydroxymethyl-2-methylpyrimidine phosphate synthase THI13 (340 aa).

Lys62 bears the N6-(pyridoxal phosphate)lysine mark. His66 is an active-site residue. Pyridoxal 5'-phosphate is bound at residue 115 to 118; the sequence is GEFG. The short motif at 195 to 199 is the CCCFC; essential for catalytic activity, may be the site of iron coordination element; that stretch reads CCCFC.

Belongs to the NMT1/THI5 family. As to quaternary structure, homodimer. It depends on Fe cation as a cofactor.

It carries out the reaction N(6)-(pyridoxal phosphate)-L-lysyl-[4-amino-5-hydroxymethyl-2-methylpyrimidine phosphate synthase] + L-histidyl-[4-amino-5-hydroxymethyl-2-methylpyrimidine phosphate synthase] + 2 Fe(3+) + 4 H2O = L-lysyl-[4-amino-5-hydroxymethyl-2-methylpyrimidine phosphate synthase] + (2S)-2-amino-5-hydroxy-4-oxopentanoyl-[4-amino-5-hydroxymethyl-2-methylpyrimidine phosphate synthase] + 4-amino-2-methyl-5-(phosphooxymethyl)pyrimidine + 3-oxopropanoate + 2 Fe(2+) + 2 H(+). It functions in the pathway cofactor biosynthesis; thiamine diphosphate biosynthesis. Functionally, responsible for the formation of the pyrimidine heterocycle in the thiamine biosynthesis pathway. Catalyzes the formation of hydroxymethylpyrimidine phosphate (HMP-P) from histidine and pyridoxal phosphate (PLP). The protein uses PLP and the active site histidine to form HMP-P, generating an inactive enzyme. The enzyme can only undergo a single turnover, which suggests it is a suicide enzyme. The protein is 4-amino-5-hydroxymethyl-2-methylpyrimidine phosphate synthase THI13 of Saccharomyces cerevisiae (strain ATCC 204508 / S288c) (Baker's yeast).